The chain runs to 165 residues: Lipoprotein signal peptidase (165 aa).

Helical transmembrane passes span 7 to 27 (YFSS…LVLL), 46 to 66 (AVTS…FSFL), 72 to 92 (WQRY…IYLL), and 100 to 120 (LFCW…IDRV). Active-site residues include Asp127 and Asp145. The chain crosses the membrane as a helical span at residues 136 to 156 (WHWPAFNIADSAICIGAVLFI).

It belongs to the peptidase A8 family.

It localises to the cell inner membrane. The enzyme catalyses Release of signal peptides from bacterial membrane prolipoproteins. Hydrolyzes -Xaa-Yaa-Zaa-|-(S,diacylglyceryl)Cys-, in which Xaa is hydrophobic (preferably Leu), and Yaa (Ala or Ser) and Zaa (Gly or Ala) have small, neutral side chains.. Its pathway is protein modification; lipoprotein biosynthesis (signal peptide cleavage). In terms of biological role, this protein specifically catalyzes the removal of signal peptides from prolipoproteins. This is Lipoprotein signal peptidase from Janthinobacterium sp. (strain Marseille) (Minibacterium massiliensis).